We begin with the raw amino-acid sequence, 343 residues long: Anthranilate phosphoribosyltransferase (343 aa).

5-phospho-alpha-D-ribose 1-diphosphate is bound by residues glycine 85, 88 to 89 (GD), threonine 93, 95 to 98 (NIST), 113 to 121 (KHGGRSVSS), and alanine 125. An anthranilate-binding site is contributed by glycine 85. A Mg(2+)-binding site is contributed by serine 97. An anthranilate-binding site is contributed by arginine 171. Residues aspartate 230 and glutamate 231 each contribute to the Mg(2+) site.

It belongs to the anthranilate phosphoribosyltransferase family. Homodimer. The cofactor is Mg(2+).

It catalyses the reaction N-(5-phospho-beta-D-ribosyl)anthranilate + diphosphate = 5-phospho-alpha-D-ribose 1-diphosphate + anthranilate. It functions in the pathway amino-acid biosynthesis; L-tryptophan biosynthesis; L-tryptophan from chorismate: step 2/5. In terms of biological role, catalyzes the transfer of the phosphoribosyl group of 5-phosphorylribose-1-pyrophosphate (PRPP) to anthranilate to yield N-(5'-phosphoribosyl)-anthranilate (PRA). The chain is Anthranilate phosphoribosyltransferase from Aromatoleum aromaticum (strain DSM 19018 / LMG 30748 / EbN1) (Azoarcus sp. (strain EbN1)).